A 486-amino-acid chain; its full sequence is uncharacterized protein (486 aa).

Residues 1-25 form the signal peptide; it reads MGTMRSVYLIIIIILFFAFISLSFG. Basic and acidic residues-rich tracts occupy residues 306-316 and 326-349; these read KKEEKENEESS and KKEEKSQTQETKKPSKNEMNKQEK. The tract at residues 306–349 is disordered; the sequence is KKEEKENEESSKTINQMQRHKKEEKSQTQETKKPSKNEMNKQEK.

This is an uncharacterized protein from Methanocaldococcus jannaschii (strain ATCC 43067 / DSM 2661 / JAL-1 / JCM 10045 / NBRC 100440) (Methanococcus jannaschii).